Consider the following 166-residue polypeptide: Salivary acidic proline-rich phosphoprotein 1/2 (166 aa).

The first 16 residues, 1 to 16 (MLLILLSVALLAFSSA), serve as a signal peptide directing secretion. Positions 16–166 (AQDLDEDVSQ…QGPPQGQSPQ (151 aa)) are disordered. Glutamine 17 is subject to Pyrrolidone carboxylic acid. An inhibits hydroxyapatite formation, binds to hydroxyapatite and calcium region spans residues 17-46 (QDLDEDVSQEDVPLVISDGGDSEQFIDEER). Position 24 is a phosphoserine; by FAM20C (serine 24). Serine 33 is subject to Phosphoserine; alternate. O-linked (GlcA) serine; alternate glycosylation is found at serine 33 and serine 38. Serine 38 is subject to Phosphoserine; by FAM20C; alternate. Low complexity-rich tracts occupy residues 48–61 (GPPLGGQQSQPSAG) and 68–82 (GPQQGPPQQGGQQQQ). Composition is skewed to pro residues over residues 83–111 (GPPPPQGKPQGPPQQGGHPPPPQGRPQGP) and 137–159 (GPPPPPPGKPQGPPPQGGRPQGP).

Proteolytically cleaved; PRP-2, PRP-1, PIF-S and Db-S yield PRP-4, PRP-3 (protein A), PIF-F and Db-F, respectively. In terms of processing, a hexuronic acid was shown to be linked to Ser-33 in about 40% of the polypeptides. Neither the structure of the carbohydrate (whether glucuronic acid or an isomer of), nor the linkage (whether a glycoside or an ester) has been definitely established.

Its subcellular location is the secreted. Functionally, PRP's act as highly potent inhibitors of crystal growth of calcium phosphates. They provide a protective and reparative environment for dental enamel which is important for the integrity of the teeth. This chain is Salivary acidic proline-rich phosphoprotein 1/2 (PRH1), found in Homo sapiens (Human).